A 235-amino-acid polypeptide reads, in one-letter code: 2-C-methyl-D-erythritol 4-phosphate cytidylyltransferase (235 aa).

It belongs to the IspD/TarI cytidylyltransferase family. IspD subfamily.

It carries out the reaction 2-C-methyl-D-erythritol 4-phosphate + CTP + H(+) = 4-CDP-2-C-methyl-D-erythritol + diphosphate. It participates in isoprenoid biosynthesis; isopentenyl diphosphate biosynthesis via DXP pathway; isopentenyl diphosphate from 1-deoxy-D-xylulose 5-phosphate: step 2/6. In terms of biological role, catalyzes the formation of 4-diphosphocytidyl-2-C-methyl-D-erythritol from CTP and 2-C-methyl-D-erythritol 4-phosphate (MEP). The sequence is that of 2-C-methyl-D-erythritol 4-phosphate cytidylyltransferase from Pseudomonas putida (strain W619).